The sequence spans 102 residues: RNA-binding protein Hfq (102 aa).

A Sm domain is found at 9 to 68; the sequence is DPFLNALRRERVPVSIYLVNGIKLQGQIESFDQFVILLKNTVSQMVYKHAISTVVPSRPV. The tract at residues 63-102 is disordered; sequence VPSRPVSHHSNNAGGGTSSNYHHGSSPQNTSAQQDSEETE. Polar residues predominate over residues 70-96; it reads HHSNNAGGGTSSNYHHGSSPQNTSAQQ.

Belongs to the Hfq family. Homohexamer.

In terms of biological role, RNA chaperone that binds small regulatory RNA (sRNAs) and mRNAs to facilitate mRNA translational regulation in response to envelope stress, environmental stress and changes in metabolite concentrations. Also binds with high specificity to tRNAs. This Shigella dysenteriae serotype 1 (strain Sd197) protein is RNA-binding protein Hfq.